The following is a 373-amino-acid chain: P2Y purinoceptor 1 (373 aa).

Residues 1–51 (MTEVLWPAAPNGTDAAFLASPGFHWGNSTATSTAAAAAPFRCALTKTGFQF) lie on the Extracellular side of the membrane. N11 and N27 each carry an N-linked (GlcNAc...) asparagine glycan. Cystine bridges form between C42–C296 and C124–C202. An ADP-binding site is contributed by K46. A helical transmembrane segment spans residues 52-74 (YYLPAVYIVVFIIGFLGNSIAIW). Residues 75 to 87 (MFVFHMKPWSGIS) are Cytoplasmic-facing. The helical transmembrane segment at 88–109 (VYMFNLALADFLYVLTLPALIF) threads the bilayer. Over 110–125 (YYFNKTNWIFGDAMCK) the chain is Extracellular. A glycan (N-linked (GlcNAc...) asparagine) is linked at N113. A helical transmembrane segment spans residues 126 to 147 (LQRFIFHVNLYGSILFLTCISA). Residues 148-166 (HRYSGVVYPLKSLGRLKKK) lie on the Cytoplasmic side of the membrane. Residues 167 to 188 (NAVYISVLVWLIVVVAISPILF) traverse the membrane as a helical segment. Over 189 to 214 (YSGTGIRKNKTITCYDTTSDEYLRSY) the chain is Extracellular. N197 carries N-linked (GlcNAc...) asparagine glycosylation. Residue 203–205 (YDT) coordinates ADP. A helical transmembrane segment spans residues 215–237 (FIYSMCTTVAMFCVPLVLILGCY). At 238 to 260 (GLIVRALIYKDLDNSPLRRKSIY) the chain is on the cytoplasmic side. A helical membrane pass occupies residues 261-284 (LVIIVLTVFAVSYIPFHVMKTMNL). Residues 283-287 (NLRAR), 303-306 (YATY), and R310 contribute to the ADP site. Over 285 to 303 (RARLDFQTPEMCTFNDRVY) the chain is Extracellular. Residues 304-325 (ATYQVTRGLASLNSCVDPILYF) form a helical membrane-spanning segment. Topologically, residues 326–373 (LAGDTFRRRLSRATRKASRRSEANLQSKSEDMTLNILSEFKQNGDTSL) are cytoplasmic.

The protein belongs to the G-protein coupled receptor 1 family.

It is found in the cell membrane. In terms of biological role, receptor for extracellular adenine nucleotides such as ADP. In platelets, binding to ADP leads to mobilization of intracellular calcium ions via activation of phospholipase C, a change in platelet shape, and ultimately platelet aggregation. This Cavia porcellus (Guinea pig) protein is P2Y purinoceptor 1 (P2RY1).